Consider the following 431-residue polypeptide: Probable 3-hydroxy-3-methylglutaryl-coenzyme A reductase (431 aa).

Residues Glu85 and Asp278 each act as charge relay system in the active site. The Proton donor role is filled by His375.

It belongs to the HMG-CoA reductase family.

The enzyme catalyses (R)-mevalonate + 2 NAD(+) + CoA = (3S)-3-hydroxy-3-methylglutaryl-CoA + 2 NADH + 2 H(+). It functions in the pathway metabolic intermediate metabolism; (R)-mevalonate degradation; (S)-3-hydroxy-3-methylglutaryl-CoA from (R)-mevalonate: step 1/1. Its function is as follows. Converts HMG-CoA to mevalonate. The chain is Probable 3-hydroxy-3-methylglutaryl-coenzyme A reductase from Borreliella burgdorferi (strain ATCC 35210 / DSM 4680 / CIP 102532 / B31) (Borrelia burgdorferi).